The following is a 471-amino-acid chain: Alpha-amylase (471 aa).

Pyrrolidone carboxylic acid is present on Q1. C28 and C84 are joined by a disulfide. Residues N98, R146, and D155 each contribute to the Ca(2+) site. C134 and C148 are oxidised to a cystine. Residue R183 participates in chloride binding. Residue D185 is the Nucleophile of the active site. H189 lines the Ca(2+) pocket. The active-site Proton donor is E222. Residues N285 and R321 each coordinate chloride. The segment covering 326–343 (FDFTDNDQGPPQDGSGNL) has biased composition (polar residues). The interval 326 to 346 (FDFTDNDQGPPQDGSGNLISP) is disordered. Disulfide bonds link C354/C360 and C425/C437.

The protein belongs to the glycosyl hydrolase 13 family. As to quaternary structure, monomer. The cofactor is Ca(2+). Chloride serves as cofactor.

It catalyses the reaction Endohydrolysis of (1-&gt;4)-alpha-D-glucosidic linkages in polysaccharides containing three or more (1-&gt;4)-alpha-linked D-glucose units.. The polypeptide is Alpha-amylase (Tenebrio molitor (Yellow mealworm beetle)).